The primary structure comprises 297 residues: tRNA(Ile)-lysidine synthase (297 aa).

An ATP-binding site is contributed by 16–21; that stretch reads SGGSDS.

Belongs to the tRNA(Ile)-lysidine synthase family.

It localises to the cytoplasm. It catalyses the reaction cytidine(34) in tRNA(Ile2) + L-lysine + ATP = lysidine(34) in tRNA(Ile2) + AMP + diphosphate + H(+). In terms of biological role, ligates lysine onto the cytidine present at position 34 of the AUA codon-specific tRNA(Ile) that contains the anticodon CAU, in an ATP-dependent manner. Cytidine is converted to lysidine, thus changing the amino acid specificity of the tRNA from methionine to isoleucine. The chain is tRNA(Ile)-lysidine synthase from Mesomycoplasma hyopneumoniae (strain 232) (Mycoplasma hyopneumoniae).